The following is a 257-amino-acid chain: Putative pentatricopeptide repeat-containing protein At1g43010 (257 aa).

2 PPR repeats span residues 133 to 168 (KMRDYSVLLSSYTKPVRTVDKAEATFKKMRELGFLL) and 169 to 203 (KPYLFNSMICLYGQLQRLDMVEKLLYKLKKNNMEV).

The protein belongs to the PPR family. P subfamily.

The protein is Putative pentatricopeptide repeat-containing protein At1g43010 of Arabidopsis thaliana (Mouse-ear cress).